The sequence spans 393 residues: Bifunctional enzyme Fae/Hps (393 aa).

Residues 1–161 form a formaldehyde-activating enzyme region; the sequence is MYLIGEALIG…HEKDRAAHAV (161 aa). Histidine 17 acts as the Proton donor in catalysis. Residues aspartate 19, leucine 48, lysine 66, threonine 68, and glutamine 83 each contribute to the substrate site. A 3-hexulose-6-phosphate synthase region spans residues 162–393; sequence MGFKVPRLWD…IDQFRIMTDF (232 aa).

This sequence in the N-terminal section; belongs to the formaldehyde-activating enzyme family. It in the C-terminal section; belongs to the HPS/KGPDC family. HPS subfamily.

The enzyme catalyses 5,6,7,8-tetrahydromethanopterin + formaldehyde = 5,10-methylenetetrahydromethanopterin + H2O. It catalyses the reaction D-ribulose 5-phosphate + formaldehyde = D-arabino-hex-3-ulose 6-phosphate. The protein operates within carbohydrate biosynthesis; D-ribose 5-phosphate biosynthesis. Catalyzes the condensation of formaldehyde with tetrahydromethanopterin (H(4)MPT) to 5,10-methylenetetrahydromethanopterin. Functionally, catalyzes the reversible formation of ribulose-5-phosphate and formaldehyde from 3-hexulose-6-phosphate. The chain is Bifunctional enzyme Fae/Hps from Methanospirillum hungatei JF-1 (strain ATCC 27890 / DSM 864 / NBRC 100397 / JF-1).